The following is a 306-amino-acid chain: Lipoyl synthase (306 aa).

[4Fe-4S] cluster-binding residues include C55, C60, C66, C81, C85, C88, and S294. Positions 67–283 constitute a Radical SAM core domain; the sequence is WNHRTATFLL…RAYALARGFR (217 aa).

Belongs to the radical SAM superfamily. Lipoyl synthase family. It depends on [4Fe-4S] cluster as a cofactor.

It is found in the cytoplasm. The enzyme catalyses [[Fe-S] cluster scaffold protein carrying a second [4Fe-4S](2+) cluster] + N(6)-octanoyl-L-lysyl-[protein] + 2 oxidized [2Fe-2S]-[ferredoxin] + 2 S-adenosyl-L-methionine + 4 H(+) = [[Fe-S] cluster scaffold protein] + N(6)-[(R)-dihydrolipoyl]-L-lysyl-[protein] + 4 Fe(3+) + 2 hydrogen sulfide + 2 5'-deoxyadenosine + 2 L-methionine + 2 reduced [2Fe-2S]-[ferredoxin]. It participates in protein modification; protein lipoylation via endogenous pathway; protein N(6)-(lipoyl)lysine from octanoyl-[acyl-carrier-protein]: step 2/2. In terms of biological role, catalyzes the radical-mediated insertion of two sulfur atoms into the C-6 and C-8 positions of the octanoyl moiety bound to the lipoyl domains of lipoate-dependent enzymes, thereby converting the octanoylated domains into lipoylated derivatives. This chain is Lipoyl synthase, found in Chloroflexus aggregans (strain MD-66 / DSM 9485).